The sequence spans 302 residues: tRNA-cytidine(32) 2-sulfurtransferase (302 aa).

The short motif at Ser45 to Ser50 is the PP-loop motif element. [4Fe-4S] cluster is bound by residues Cys120, Cys123, and Cys211.

This sequence belongs to the TtcA family. Homodimer. Requires Mg(2+) as cofactor. [4Fe-4S] cluster serves as cofactor.

The protein localises to the cytoplasm. It catalyses the reaction cytidine(32) in tRNA + S-sulfanyl-L-cysteinyl-[cysteine desulfurase] + AH2 + ATP = 2-thiocytidine(32) in tRNA + L-cysteinyl-[cysteine desulfurase] + A + AMP + diphosphate + H(+). It functions in the pathway tRNA modification. Catalyzes the ATP-dependent 2-thiolation of cytidine in position 32 of tRNA, to form 2-thiocytidine (s(2)C32). The sulfur atoms are provided by the cysteine/cysteine desulfurase (IscS) system. The protein is tRNA-cytidine(32) 2-sulfurtransferase of Aeromonas salmonicida (strain A449).